The chain runs to 473 residues: Photosystem II CP43 reaction center protein (473 aa).

A propeptide spanning residues methionine 1 to glutamate 14 is cleaved from the precursor. Threonine 15 carries the N-acetylthreonine modification. Position 15 is a phosphothreonine (threonine 15). The next 5 helical transmembrane spans lie at leucine 69 to alanine 93, leucine 134 to asparagine 155, lysine 178 to threonine 200, lysine 255 to serine 275, and tryptophan 291 to alanine 312. Residue glutamate 367 participates in [CaMn4O5] cluster binding. A helical membrane pass occupies residues arginine 447–proline 471.

The protein belongs to the PsbB/PsbC family. PsbC subfamily. PSII is composed of 1 copy each of membrane proteins PsbA, PsbB, PsbC, PsbD, PsbE, PsbF, PsbH, PsbI, PsbJ, PsbK, PsbL, PsbM, PsbT, PsbX, PsbY, PsbZ, Psb30/Ycf12, at least 3 peripheral proteins of the oxygen-evolving complex and a large number of cofactors. It forms dimeric complexes. Binds multiple chlorophylls and provides some of the ligands for the Ca-4Mn-5O cluster of the oxygen-evolving complex. It may also provide a ligand for a Cl- that is required for oxygen evolution. PSII binds additional chlorophylls, carotenoids and specific lipids. is required as a cofactor.

Its subcellular location is the plastid. It is found in the chloroplast thylakoid membrane. In terms of biological role, one of the components of the core complex of photosystem II (PSII). It binds chlorophyll and helps catalyze the primary light-induced photochemical processes of PSII. PSII is a light-driven water:plastoquinone oxidoreductase, using light energy to abstract electrons from H(2)O, generating O(2) and a proton gradient subsequently used for ATP formation. The protein is Photosystem II CP43 reaction center protein of Pinus koraiensis (Korean pine).